Reading from the N-terminus, the 85-residue chain is Putative septation protein SpoVG (85 aa).

It belongs to the SpoVG family.

In terms of biological role, could be involved in septation. The chain is Putative septation protein SpoVG from Archaeoglobus fulgidus (strain ATCC 49558 / DSM 4304 / JCM 9628 / NBRC 100126 / VC-16).